A 1819-amino-acid polypeptide reads, in one-letter code: MASITQLFDDLCEALLPAAKTHLGQRSVNRKRAKRSLKKVAYNALFTNLFQDETQQLQPDMSKLPARNKILMLSFDLRVGGLGPKADRLEELVEELEAAPCCPLLEVGSVLDLLVQLAGSGPPQVLPRKRDYFLNNKHVGRNVPYSGYDCDDLSVFEMDVQSLISREECLCHSMIQETLQVMEAAPGTGLPTVGLFSFGDPCGDRFERDTRVSLFGALVHSRTYDMDVRLGLPPVPDNADLSGLAIKVPPSVDQWEDEGFQSASNLTPDSQSEPSVTPDVDLWEAALTYEASKRRCWERVGCPPGHREEPYLTEAGRDAFDKFCRLHQGELQLLAGGVLQAPQPVLVKECELVKDVLNVLIGVVSATFSLCQPAQAFVVKRGVHVSGASPESISSLLSEVAEYGTCYTRLSHFSLQPVLDSLYSKGLVFQAFTSGLRRYLQYYRACVLSTPPTLSLLTIGFLFKKLGRQLRYLAELCGVGAVLPGTCGGGPRAAFPTGVKLLSYLYQEALHNCSNEHYPVLLSLLKTSCEPYTRFIHDWVYSGVFRDAYGEFMIQVNHEYLSFRDKLYWTHGYVLISKEVEDCVPVFLKHIAHDIYVCGKTINLLKLCCPRHYLCWSDVPVPRISVIFSLEELKEIEKDCAVYVGRMERVARHSSVSKEEKELRMEIAKQELIAHAREAASRVLSALSDRQMSERMALDARKREQFQRLKEQFVKDQERRQAARQEELDDDFSYARELRDRERRLKSLEEELERKARQALVDHYSKLSAEAARREQKALWRIQRHRLESARLRFLLEDEKHIQEMLKAVSEAHQPQEPPDVLLSVHPQVTSPGPEHPEGGQGCDSGSAEQHSPAWDGWNRPGLLTPQPLKPLAVGAGGRGLQQAEGARPFSDSLSIGDFLPVGPGAEPSVQTGMVPLLEVALQTINLDLPPSAPGEAPAAASTQPSRPQEYDFSTVLRPAVATSPAPGPLQAAECSLGSSGLQLWEDSCGKMDACGSASRETLLPSHPPRRAALEEGSSQPTERLFGQVSGGGLPTGDYASEIAPTRPRWNTHGHVSDASIRVGENVSDVAPTQPRWNTHGHVSNASISLGESVSDVAPTRPRWNIHGHVSNASIRVGENVSDVAPTRPRWNTHGHVSNASIRVGENVSDVAPTRPRWNTHGHVSDASISLGESVSDMAPARPRWNTHGHVSDASISLGESVSDMAPTRPRWNTHGHVSDTSIRVGENVSDVAPIRSRCNTHGHVSDASISLGEPVSDVVSTRPRWNTHVPIPPPHMVLGALSPEAEPNTPRPQQSPPGHTSQSALSLGAQSTVLDCGPRLPVEVGPSLSSPSSGCGEGSISVGENVSDVAPTQPWWPNTPGDSVSEELGPGRSGDTEDLSPNWPLNSQEDTAAQSSPGRGEEAEASAAEAQGGEQAYLAGLAGQYHLERYPDSYESMSEPPIAHLLRPVLPRAFAFPVDPQVQSAADETAVQLSELLTLPVLMKRSITAPLAAHISLVNKAAVDYFFVELHLEAHYEALRHFLLMEDGEFAQSLSDLLFEKLGAGQTPGELLNPLVLNSVLSKALQCSLHGDTPHASNLSLALKYLPEVFAPNAPDVLSCLELRYKVDWPLNIVITEGCVSKYSGVFSFLLQLKLMMWALKDVCFHLKRTALLSHMAGSVQFRQLQLFKHEMQHFVKVIQGYIANQILHVTWCEFRARLATVGDLEEIQRAHAEYLHKAVFRGLLTEKAAPVMNVIHSIFSLVLKFRSQLISQAWGPPGGPRGAEHPNFALMQQSYNTFKYYSHFLFKVVTKLVNRGYQPHLEDFLLRINFNNYYQDA.

Disordered stretches follow at residues 810–889 (SEAH…GARP), 929–951 (LPPS…PQEY), and 1000–1023 (RETL…QPTE). Tandem repeats lie at residues 1027–1053 (GQVS…WNTH), 1054–1080 (GHVS…WNTH), 1081–1107 (GHVS…WNIH), 1108–1134 (GHVS…WNTH), 1135–1161 (GHVS…WNTH), 1162–1188 (GHVS…WNTH), 1189–1215 (GHVS…WNTH), 1216–1242 (GHVS…CNTH), and 1243–1269 (GHVS…WNTH). The tract at residues 1027–1269 (GQVSGGGLPT…VSTRPRWNTH (243 aa)) is 9 X 27 AA tandem repeats. Positions 1271 to 1412 (PIPPPHMVLG…EAEASAAEAQ (142 aa)) are disordered. The span at 1297-1314 (PPGHTSQSALSLGAQSTV) shows a compositional bias: polar residues. Over residues 1321–1335 (LPVEVGPSLSSPSSG) the composition is skewed to low complexity. Over residues 1384-1398 (WPLNSQEDTAAQSSP) the composition is skewed to polar residues.

This sequence belongs to the TUBGCP family. As to quaternary structure, component of the gamma-tubulin ring complex (gTuRC) consisting of TUBGCP2, TUBGCP3, TUBGCP4, TUBGCP5 and TUBGCP6 and gamma-tubulin TUBG1 or TUBG2. TUBGCP2, TUBGCP3, TUBGCP4, TUBGCP5 and TUBGCP6 assemble in a 5:5:2:1:1 stoichiometry; each is associated with a gamma-tubulin, thereby arranging 14 gamma-tubulins in a helical manner. Gamma-tubulin at the first position is blocked by TUBGCP3 at the last position, allowing 13 protafilaments to grow into a microtubule. The gTuRC (via TUBGCP3 and TUBGCP6) interacts with ACTB and MZT1; the interactions form a luminal bridge that stabilizes the initial structure during complex assembly. The gTuRC (via TUBGCP2) interacts with MZT2A/MZT2B and CDK5RAP2 (via CM1 motif); the interactions play a role in gTuRC activation.

Its subcellular location is the cytoplasm. It localises to the cytoskeleton. It is found in the microtubule organizing center. The protein resides in the centrosome. Functionally, component of the gamma-tubulin ring complex (gTuRC) which mediates microtubule nucleation. The gTuRC regulates the minus-end nucleation of alpha-beta tubulin heterodimers that grow into microtubule protafilaments, a critical step in centrosome duplication and spindle formation. This is Gamma-tubulin complex component 6 (TUBGCP6) from Homo sapiens (Human).